We begin with the raw amino-acid sequence, 294 residues long: MAAASTTSRTNSRVNYSNEIHDLSTVQSGSVVPTLFYPDKSIADIFPPHLGKKVISEVVATFLLVFVTCGAASIYGEDNRRISQLGQSVAGGLIVTVMIYATGHISGAHMNPAVTLSFACFRHFPWIQVPFYWAAQFTGAMCAAFVLKAVLHPIAVIGTTTPSGPHWHALLIEIVVTFNMMFVTCAVATDSRAVGELAGLAVGSAVCITSIFAGPVSGGSMNPARTLAPAVASNVFTGLWIYFLGPVIGTLSGAWVYTYIRFEEAPAAKDTQRLSSFKLRRMQSQLAADEFDTV.

A run of 2 helical transmembrane segments spans residues 54 to 74 and 88 to 108; these read VISEVVATFLLVFVTCGAASI and SVAGGLIVTVMIYATGHISGA. The NPA 1 motif lies at 111–113; that stretch reads NPA. 3 consecutive transmembrane segments (helical) span residues 129-151, 169-189, and 197-217; these read VPFYWAAQFTGAMCAAFVLKAVL, ALLIEIVVTFNMMFVTCAVAT, and LAGLAVGSAVCITSIFAGPVS. The NPA 2 signature appears at 222–224; the sequence is NPA. A helical membrane pass occupies residues 235-255; the sequence is VFTGLWIYFLGPVIGTLSGAW.

This sequence belongs to the MIP/aquaporin (TC 1.A.8) family. NIP (TC 1.A.8.12) subfamily.

The protein resides in the membrane. Its function is as follows. Aquaporins facilitate the transport of water and small neutral solutes across cell membranes. This chain is Aquaporin NIP2-2 (NIP2-2), found in Zea mays (Maize).